Reading from the N-terminus, the 557-residue chain is Glutathione hydrolase proenzyme (557 aa).

The N-terminal stretch at 1–24 (MQPVLFRTLSLGVAIAAASSSAFA) is a signal peptide. Residue R94 coordinates L-glutamate. T364 (nucleophile) is an active-site residue. L-glutamate is bound by residues T382, N384, E403, D406, 435–436 (SS), and 456–457 (GG).

This sequence belongs to the gamma-glutamyltransferase family. In terms of assembly, this enzyme consists of two polypeptide chains, which are synthesized in precursor form from a single polypeptide. Post-translationally, cleaved by autocatalysis into a large and a small subunit.

It localises to the periplasm. The catalysed reaction is an N-terminal (5-L-glutamyl)-[peptide] + an alpha-amino acid = 5-L-glutamyl amino acid + an N-terminal L-alpha-aminoacyl-[peptide]. It catalyses the reaction glutathione + H2O = L-cysteinylglycine + L-glutamate. It carries out the reaction an S-substituted glutathione + H2O = an S-substituted L-cysteinylglycine + L-glutamate. It functions in the pathway sulfur metabolism; glutathione metabolism. The chain is Glutathione hydrolase proenzyme (ggt) from Pseudomonas aeruginosa (strain ATCC 15692 / DSM 22644 / CIP 104116 / JCM 14847 / LMG 12228 / 1C / PRS 101 / PAO1).